A 589-amino-acid chain; its full sequence is ATP-dependent lipid A-core flippase (589 aa).

The next 5 membrane-spanning stretches (helical) occupy residues 29-49, 70-90, 157-177, 261-281, and 283-303; these read LLLVAALIAALIEAAGTTGFL, WLPVQIILLFVIRGAAGYITD, VIGALALMLWHSWQVTLTILV, MIGAIGLSALLFVAGAQALAG, and LTAGDFVVLMTSMLTIIPGLK. Residues 32 to 314 enclose the ABC transmembrane type-1 domain; sequence VAALIAALIE…LTNVQNMVQR (283 aa). An ABC transporter domain is found at 346 to 582; sequence IEFRDVTARY…GGLYSHLHGM (237 aa). Residue 380–387 coordinates ATP; it reads GRSGSGKS.

This sequence belongs to the ABC transporter superfamily. Lipid exporter (TC 3.A.1.106) family. In terms of assembly, homodimer.

It localises to the cell inner membrane. It carries out the reaction ATP + H2O + lipid A-core oligosaccharideSide 1 = ADP + phosphate + lipid A-core oligosaccharideSide 2.. Functionally, involved in lipopolysaccharide (LPS) biosynthesis. Translocates lipid A-core from the inner to the outer leaflet of the inner membrane. Transmembrane domains (TMD) form a pore in the inner membrane and the ATP-binding domain (NBD) is responsible for energy generation. The protein is ATP-dependent lipid A-core flippase of Xanthomonas campestris pv. campestris (strain 8004).